The primary structure comprises 347 residues: Heat-inducible transcription repressor HrcA (347 aa).

The protein belongs to the HrcA family.

Functionally, negative regulator of class I heat shock genes (grpE-dnaK-dnaJ and groELS operons). Prevents heat-shock induction of these operons. The chain is Heat-inducible transcription repressor HrcA from Laribacter hongkongensis (strain HLHK9).